The following is a 1084-amino-acid chain: Cellulose synthase A catalytic subunit 2 [UDP-forming] (1084 aa).

Methionine 1 carries the N-acetylmethionine modification. Topologically, residues 1–278 are cytoplasmic; sequence MNTGGRLIAG…RSSRINPYRM (278 aa). 8 residues coordinate Zn(2+): cysteine 39, cysteine 42, cysteine 58, cysteine 61, cysteine 66, cysteine 69, cysteine 81, and cysteine 84. An RING-type; degenerate zinc finger spans residues 39–85; the sequence is CQICGDEIELTVSSELFVACNECAFPVCRPCYEYERREGNQACPQCK. The disordered stretch occupies residues 230–259; that stretch reads IKHEGGNNGRGSNDDDELDDPDMPMMDEGR. The helical transmembrane segment at 279–299 threads the bilayer; it reads LILCRLAILGLFFHYRILHPV. At 300 to 301 the chain is on the extracellular side; it reads ND. Residues 302–322 traverse the membrane as a helical segment; the sequence is AYGLWLTSVICEIWFAVSWIL. Topologically, residues 323 to 867 are cytoplasmic; that stretch reads DQFPKWYPIE…INSVVYPWTS (545 aa). UDP-alpha-D-glucose-binding residues include serine 361, lysine 367, glutamate 368, and aspartate 397. Aspartate 397 is a catalytic residue. The stretch at 451 to 477 forms a coiled coil; the sequence is VRERRAMKRDYEEFKVKINALVATAQK. Lysine 538 provides a ligand contact to UDP-alpha-D-glucose. Residues lysine 539 and aspartate 563 each coordinate Mn(2+). Aspartate 784 is an active-site residue. The chain crosses the membrane as a helical span at residues 868–888; it reads LPLIVYCSLPAVCLLTGKFIV. Topologically, residues 889–893 are extracellular; that stretch reads PEISN. Residues 894–914 form a helical membrane-spanning segment; the sequence is YAGILFMLMFISIAVTGILEM. Residues 915-929 lie on the Cytoplasmic side of the membrane; sequence QWGGVGIDDWWRNEQ. A helical membrane pass occupies residues 930–950; sequence FWVIGGASSHLFALFQGLLKV. The Extracellular segment spans residues 951-979; sequence LAGVNTNFTVTSKAADDGAFSELYIFKWT. Asparagine 957 carries an N-linked (GlcNAc...) asparagine glycan. Residues 980 to 1000 traverse the membrane as a helical segment; it reads TLLIPPTTLLIINIIGVIVGV. Topologically, residues 1001-1011 are cytoplasmic; that stretch reads SDAISNGYDSW. The chain crosses the membrane as a helical span at residues 1012–1032; sequence GPLFGRLFFALWVIVHLYPFL. At 1033–1041 the chain is on the extracellular side; the sequence is KGMLGKQDK. The helical transmembrane segment at 1042–1062 threads the bilayer; that stretch reads MPTIIVVWSILLASILTLLWV. The Cytoplasmic segment spans residues 1063-1084; sequence RVNPFVAKGGPVLEICGLNCGN.

This sequence belongs to the glycosyltransferase 2 family. Plant cellulose synthase subfamily. As to quaternary structure, homodimer. Interaction through zinc finger domain. Mn(2+) is required as a cofactor. Requires Zn(2+) as cofactor. As to expression, strongly and ubiquitously expressed. Localized in some dividing and expanding cells, as well as in vascular tissues.

Its subcellular location is the cell membrane. The enzyme catalyses [(1-&gt;4)-beta-D-glucosyl](n) + UDP-alpha-D-glucose = [(1-&gt;4)-beta-D-glucosyl](n+1) + UDP + H(+). It participates in glycan metabolism; plant cellulose biosynthesis. Its function is as follows. Catalytic subunit of cellulose synthase terminal complexes ('rosettes'), required for beta-1,4-glucan microfibril crystallization, a major mechanism of the cell wall formation. Involved in the primary cell wall formation. This is Cellulose synthase A catalytic subunit 2 [UDP-forming] from Arabidopsis thaliana (Mouse-ear cress).